A 279-amino-acid chain; its full sequence is Aquaporin A (279 aa).

The Cytoplasmic segment spans residues M1–E40. Residues F41 to V61 traverse the membrane as a helical segment. Residues A62–A69 are Extracellular-facing. The helical transmembrane segment at L70–V90 threads the bilayer. Residues S91–S114 are Cytoplasmic-facing. The NPA 1 motif lies at N96 to A98. Residues L115 to C135 form a helical membrane-spanning segment. The Extracellular portion of the chain corresponds to L136–A158. Residues F159–F179 traverse the membrane as a helical segment. Topologically, residues N180–R188 are cytoplasmic. The chain crosses the membrane as a helical span at residues I189 to S209. The Extracellular segment spans residues G210–V227. Positions N214 to V216 match the NPA 2 motif. The chain crosses the membrane as a helical span at residues W228–I248. The Cytoplasmic segment spans residues Y249–Y279.

This sequence belongs to the MIP/aquaporin (TC 1.A.8) family.

It localises to the cell membrane. In terms of biological role, may form a water-specific channel. Required for prolonged spore survival on fruiting bodies. In Dictyostelium discoideum (Social amoeba), this protein is Aquaporin A (aqpA).